A 127-amino-acid chain; its full sequence is MFQLLCAVFIGGGTGSVLRWWLGMKLNPVHHAIPIGTLTANLVGAFVIGAGLAWFNRLTDIDPMWKLLITTGFCGGLTTFSTFSAEVVFLLQQGRVSWALLNVMVNLLGSFAMTAVAFWLFSQAASR.

The next 4 helical transmembrane spans lie at 4-24, 35-55, 71-91, and 101-121; these read LLCAVFIGGGTGSVLRWWLGM, IGTLTANLVGAFVIGAGLAWF, TGFCGGLTTFSTFSAEVVFLL, and LNVMVNLLGSFAMTAVAFWLF. The Na(+) site is built by Gly-75 and Thr-78.

The protein belongs to the fluoride channel Fluc/FEX (TC 1.A.43) family.

It localises to the cell inner membrane. It catalyses the reaction fluoride(in) = fluoride(out). Its activity is regulated as follows. Na(+) is not transported, but it plays an essential structural role and its presence is essential for fluoride channel function. Functionally, fluoride-specific ion channel. Important for reducing fluoride concentration in the cell, thus reducing its toxicity. This is Fluoride-specific ion channel FluC from Klebsiella pneumoniae (strain 342).